The primary structure comprises 235 residues: Ubiquinone biosynthesis O-methyltransferase (235 aa).

Residues arginine 39, glycine 59, aspartate 80, and methionine 124 each coordinate S-adenosyl-L-methionine.

The protein belongs to the methyltransferase superfamily. UbiG/COQ3 family.

The enzyme catalyses a 3-demethylubiquinol + S-adenosyl-L-methionine = a ubiquinol + S-adenosyl-L-homocysteine + H(+). It catalyses the reaction a 3-(all-trans-polyprenyl)benzene-1,2-diol + S-adenosyl-L-methionine = a 2-methoxy-6-(all-trans-polyprenyl)phenol + S-adenosyl-L-homocysteine + H(+). It participates in cofactor biosynthesis; ubiquinone biosynthesis. Its function is as follows. O-methyltransferase that catalyzes the 2 O-methylation steps in the ubiquinone biosynthetic pathway. The sequence is that of Ubiquinone biosynthesis O-methyltransferase from Photobacterium profundum (strain SS9).